The primary structure comprises 322 residues: Deoxycytidylate deaminase (322 aa).

The CMP/dCMP-type deaminase domain occupies 173–311 (SWDSYFMEMA…SLLQAAGVQL (139 aa)). Histidine 246 provides a ligand contact to Zn(2+). Glutamate 248 functions as the Proton donor in the catalytic mechanism. The Zn(2+) site is built by cysteine 273 and cysteine 276.

This sequence belongs to the cytidine and deoxycytidylate deaminase family. It depends on Zn(2+) as a cofactor.

The protein localises to the cytoplasm. It is found in the nucleus. The enzyme catalyses dCMP + H2O + H(+) = dUMP + NH4(+). Its function is as follows. Supplies the nucleotide substrate for thymidylate synthetase. This Schizosaccharomyces pombe (strain 972 / ATCC 24843) (Fission yeast) protein is Deoxycytidylate deaminase.